We begin with the raw amino-acid sequence, 309 residues long: HPr kinase/phosphorylase (309 aa).

Residues histidine 138 and lysine 159 contribute to the active site. 153–160 (GQSGVGKS) lines the ATP pocket. Serine 160 contacts Mg(2+). Catalysis depends on aspartate 177, which acts as the Proton acceptor; for phosphorylation activity. Proton donor; for dephosphorylation activity. Residues 201 to 210 (LEIRGLGIIN) are important for the catalytic mechanism of both phosphorylation and dephosphorylation. A Mg(2+)-binding site is contributed by glutamate 202. Arginine 243 is a catalytic residue. An important for the catalytic mechanism of dephosphorylation region spans residues 264 to 269 (PVRPGR).

The protein belongs to the HPrK/P family. As to quaternary structure, homohexamer. The cofactor is Mg(2+).

The catalysed reaction is [HPr protein]-L-serine + ATP = [HPr protein]-O-phospho-L-serine + ADP + H(+). It catalyses the reaction [HPr protein]-O-phospho-L-serine + phosphate + H(+) = [HPr protein]-L-serine + diphosphate. Functionally, catalyzes the ATP- as well as the pyrophosphate-dependent phosphorylation of a specific serine residue in HPr, a phosphocarrier protein of the phosphoenolpyruvate-dependent sugar phosphotransferase system (PTS). HprK/P also catalyzes the pyrophosphate-producing, inorganic phosphate-dependent dephosphorylation (phosphorolysis) of seryl-phosphorylated HPr (P-Ser-HPr). The two antagonistic activities of HprK/P are regulated by several intracellular metabolites, which change their concentration in response to the absence or presence of rapidly metabolisable carbon sources (glucose, fructose, etc.) in the growth medium. Also phosphorylates/dephosphorylates the HPr-like catabolite repression protein crh on a specific serine residue. Therefore, by controlling the phosphorylation state of HPr and crh, HPrK/P is a sensor enzyme that plays a major role in the regulation of carbon metabolism and sugar transport: it mediates carbon catabolite repression (CCR), and regulates PTS-catalyzed carbohydrate uptake and inducer exclusion. The chain is HPr kinase/phosphorylase from Bacillus cereus (strain AH820).